Consider the following 417-residue polypeptide: Gamma-glutamyl phosphate reductase (417 aa).

It belongs to the gamma-glutamyl phosphate reductase family.

The protein localises to the cytoplasm. It catalyses the reaction L-glutamate 5-semialdehyde + phosphate + NADP(+) = L-glutamyl 5-phosphate + NADPH + H(+). It functions in the pathway amino-acid biosynthesis; L-proline biosynthesis; L-glutamate 5-semialdehyde from L-glutamate: step 2/2. Functionally, catalyzes the NADPH-dependent reduction of L-glutamate 5-phosphate into L-glutamate 5-semialdehyde and phosphate. The product spontaneously undergoes cyclization to form 1-pyrroline-5-carboxylate. This chain is Gamma-glutamyl phosphate reductase, found in Clostridium novyi (strain NT).